The primary structure comprises 766 residues: Phospholipid phosphatase-related protein type 4 (766 aa).

Ser37 is modified (phosphoserine). The next 3 membrane-spanning stretches (helical) occupy residues Leu68–Phe88, Ala120–Val140, and Phe179–Leu199. Asn215 and Asn220 each carry an N-linked (GlcNAc...) asparagine glycan. A helical membrane pass occupies residues Ser248 to Phe268. The N-linked (GlcNAc...) asparagine glycan is linked to Asn269. 2 consecutive transmembrane segments (helical) span residues Lys277–Thr297 and Val309–Gly329. Ser347 is subject to Phosphoserine. A glycan (N-linked (GlcNAc...) asparagine) is linked at Asn363. Ser386 is modified (phosphoserine). Residue Asn433 is glycosylated (N-linked (GlcNAc...) asparagine). The residue at position 439 (Ser439) is a Phosphoserine. The tract at residues Ser454–Gly494 is disordered. Residue Asn456 is glycosylated (N-linked (GlcNAc...) asparagine). Phosphoserine is present on residues Ser462 and Ser474. Asn515, Asn545, and Asn570 each carry an N-linked (GlcNAc...) asparagine glycan. Ser608 bears the Phosphoserine mark. Disordered regions lie at residues Pro634–Ala654, Asp672–His701, and Glu742–Asp766. The span at Asp672–Glu697 shows a compositional bias: basic and acidic residues. The span at Arg743–Asn752 shows a compositional bias: polar residues.

The protein belongs to the PA-phosphatase related phosphoesterase family. Post-translationally, O-glycosylated. Probably at Ser-347. In terms of tissue distribution, brain-specific, it is exclusively expressed in neurons (at protein level).

The protein resides in the postsynaptic density membrane. Its function is as follows. Postsynaptic density membrane protein that indirectly regulates glutamatergic synaptic transmission through lysophosphatidic acid (LPA)-mediated signaling pathways. Binds lysophosphatidic acid (LPA) and mediates its internalization into cells. Could act as receptor or a transporter of this lipid at the post-synaptic membrane. Modulates lysophosphatidic acid (LPA) activity in neuron axonal outgrowth during development by attenuating phospholipid-induced axon collapse. This Mus musculus (Mouse) protein is Phospholipid phosphatase-related protein type 4.